We begin with the raw amino-acid sequence, 166 residues long: Large ribosomal subunit protein bL17 (166 aa).

Residues 122 to 166 are disordered; sequence PESAPVKAKQDRSKRVRGSKKTQEGSEKAEVSASAGEAAAVTEEK. Positions 142 to 151 are enriched in basic and acidic residues; it reads KTQEGSEKAE. Over residues 152–166 the composition is skewed to low complexity; that stretch reads VSASAGEAAAVTEEK.

This sequence belongs to the bacterial ribosomal protein bL17 family. As to quaternary structure, part of the 50S ribosomal subunit. Contacts protein L32.

In Chlorobium phaeobacteroides (strain BS1), this protein is Large ribosomal subunit protein bL17.